A 617-amino-acid chain; its full sequence is Putative type VI secretion system protein VgrGB (617 aa).

The tract at residues 449–469 (RTFHATNPSPYPLPASKTRTS) is disordered.

The protein belongs to the VgrG protein family.

A Vgr protein that is probably part of a type VI secretion system (T6SS). May be required for export of proteins involved in Rhs-mediated cellular contact-dependent growth inhibition (CDI). The polypeptide is Putative type VI secretion system protein VgrGB (vgrGB) (Dickeya dadantii (strain 3937) (Erwinia chrysanthemi (strain 3937))).